The sequence spans 816 residues: H(+)/Cl(-) exchange transporter 5 (816 aa).

The Cytoplasmic segment spans residues 1–124; that stretch reads MAMWQGAMDN…WALIHSVSDA (124 aa). A run of 2 helical transmembrane segments spans residues 125–162 and 208–231; these read FSGWLLMLLIGLLSGSLAGLIDISAHWMTDLKEGICTG and VNYFMYVLWALLFAFLAVSLVKAF. Positions 237 to 241 match the Selectivity filter part_1 motif; that stretch reads GSGIP. S238 is a chloride binding site. An intramembrane region (helical) is located at residues 240–247; the sequence is IPEIKTIL. 2 helical membrane-spanning segments follow: residues 256–275 and 281–300; these read LGKWTLVIKTITLVLAVSSG and EGPLVHVACCCGNILCHCFN. A Selectivity filter part_2 motif is present at residues 279 to 283; the sequence is GKEGP. 2 consecutive intramembrane regions (helical) follow at residues 312–324 and 328–336; these read VLSAAAAAGVSVA and PIGGVLFSL. 5 consecutive transmembrane segments (helical) span residues 348–366, 389–414, 422–442, 498–518, and 523–542; these read LWRSFFAALVAAFTLRSIN, LVPFIVLGIFGGLWGALFIRTNIAWC, LGKYPVVEVLIVTAITAILAF, MWQLALTLILKIVITIFTFGM, and GLFIPSMAVGAIAGRLLGVG. The Selectivity filter part_3 signature appears at 523-527; it reads GLFIP. Position 525 (F525) interacts with chloride. An intramembrane region (helical) is located at residues 570–584; sequence GLYAMVGAAACLGGV. Residues 585-587 constitute an intramembrane region (note=Loop between two helices); it reads TRM. The segment at residues 588 to 599 is an intramembrane region (helical); that stretch reads TVSLVVIMFELT. Residues 600-604 constitute an intramembrane region (note=Loop between two helices); the sequence is GGLEY. A helical membrane pass occupies residues 605–622; that stretch reads IVPLMAAAMTSKWVADAL. Topologically, residues 623–816 are cytoplasmic; sequence GREGIYDAHI…NQDPDSILFN (194 aa). Y628 lines the chloride pocket. CBS domains follow at residues 656–720 and 752–812; these read MKPR…ARKK and ILDL…DPDS. Residues T666, 687-689, and 794-797 each bind ATP; these read YSG and TKKD.

It belongs to the chloride channel (TC 2.A.49) family. ClC-5/CLCN5 subfamily. In terms of assembly, interacts with NEDD4 and NEDD4L. In terms of processing, ubiquitinated by NEDD4L in the presence of albumin; which promotes endocytosis and proteasomal degradation. As to expression, kidney specific.

It localises to the golgi apparatus membrane. The protein localises to the endosome membrane. It is found in the cell membrane. It carries out the reaction 2 chloride(in) + H(+)(out) = 2 chloride(out) + H(+)(in). In terms of biological role, proton-coupled chloride transporter. Functions as antiport system and exchanges chloride ions against protons. Important for normal acidification of the endosome lumen. May play an important role in renal tubular function. The CLC channel family contains both chloride channels and proton-coupled anion transporters that exchange chloride or another anion for protons. The absence of conserved gating glutamate residues is typical for family members that function as channels. In Mus musculus (Mouse), this protein is H(+)/Cl(-) exchange transporter 5 (Clcn5).